The sequence spans 240 residues: Ribonuclease PH (240 aa).

Residues Arg-87 and 125–127 contribute to the phosphate site; that span reads GTR.

It belongs to the RNase PH family. In terms of assembly, homohexameric ring arranged as a trimer of dimers.

It catalyses the reaction tRNA(n+1) + phosphate = tRNA(n) + a ribonucleoside 5'-diphosphate. Functionally, phosphorolytic 3'-5' exoribonuclease that plays an important role in tRNA 3'-end maturation. Removes nucleotide residues following the 3'-CCA terminus of tRNAs; can also add nucleotides to the ends of RNA molecules by using nucleoside diphosphates as substrates, but this may not be physiologically important. Probably plays a role in initiation of 16S rRNA degradation (leading to ribosome degradation) during starvation. In Pseudomonas syringae pv. syringae (strain B728a), this protein is Ribonuclease PH.